A 253-amino-acid polypeptide reads, in one-letter code: Probable U3 small nucleolar RNA-associated protein 11 (253 aa).

The tract at residues 1-21 is disordered; that stretch reads MAAAFRKAVKSRQREYRERSQ. Residues Lys74, Lys83, and Lys86 each participate in a glycyl lysine isopeptide (Lys-Gly) (interchain with G-Cter in SUMO2) cross-link. Residue Thr90 is modified to Phosphothreonine. Residues Lys103, Lys120, Lys143, Lys144, Lys180, Lys211, Lys218, Lys235, and Lys236 each participate in a glycyl lysine isopeptide (Lys-Gly) (interchain with G-Cter in SUMO2) cross-link. Phosphoserine is present on Ser241. A Glycyl lysine isopeptide (Lys-Gly) (interchain with G-Cter in SUMO2) cross-link involves residue Lys246.

This sequence belongs to the UTP11 family. Part of the small subunit (SSU) processome, composed of more than 70 proteins and the RNA chaperone small nucleolar RNA (snoRNA) U3.

It localises to the nucleus. It is found in the nucleolus. Its function is as follows. Part of the small subunit (SSU) processome, first precursor of the small eukaryotic ribosomal subunit. During the assembly of the SSU processome in the nucleolus, many ribosome biogenesis factors, an RNA chaperone and ribosomal proteins associate with the nascent pre-rRNA and work in concert to generate RNA folding, modifications, rearrangements and cleavage as well as targeted degradation of pre-ribosomal RNA by the RNA exosome. Involved in nucleolar processing of pre-18S ribosomal RNA. This chain is Probable U3 small nucleolar RNA-associated protein 11, found in Rattus norvegicus (Rat).